The following is a 398-amino-acid chain: Succinate--CoA ligase [ADP-forming] subunit beta (398 aa).

The ATP-grasp domain maps to 9 to 254 (KRLLHEYGAP…LSEEDPKEIE (246 aa)). ATP is bound by residues Lys46, 53–55 (GRG), Glu109, Ala112, and Glu117. Asn209 and Asp223 together coordinate Mg(2+). Substrate-binding positions include Asn274 and 331–333 (GIM).

This sequence belongs to the succinate/malate CoA ligase beta subunit family. In terms of assembly, heterotetramer of two alpha and two beta subunits. Requires Mg(2+) as cofactor.

The enzyme catalyses succinate + ATP + CoA = succinyl-CoA + ADP + phosphate. It carries out the reaction GTP + succinate + CoA = succinyl-CoA + GDP + phosphate. It participates in carbohydrate metabolism; tricarboxylic acid cycle; succinate from succinyl-CoA (ligase route): step 1/1. Succinyl-CoA synthetase functions in the citric acid cycle (TCA), coupling the hydrolysis of succinyl-CoA to the synthesis of either ATP or GTP and thus represents the only step of substrate-level phosphorylation in the TCA. The beta subunit provides nucleotide specificity of the enzyme and binds the substrate succinate, while the binding sites for coenzyme A and phosphate are found in the alpha subunit. The polypeptide is Succinate--CoA ligase [ADP-forming] subunit beta (Bartonella tribocorum (strain CIP 105476 / IBS 506)).